Reading from the N-terminus, the 637-residue chain is Limonene synthase, chloroplastic (637 aa).

A chloroplast-targeting transit peptide spans 1–56 (MALLSIVSLQVPKSCGLKSLISSSNVQKALCISTAVPTLRMRRRQKALVINMKLTT). Mg(2+)-binding residues include aspartate 388, aspartate 392, and aspartate 540. The short motif at 388–392 (DDIYD) is the DDXXD motif element.

It belongs to the terpene synthase family. Tpsd subfamily. It depends on Mg(2+) as a cofactor. Requires Mn(2+) as cofactor. K(+) is required as a cofactor.

Its subcellular location is the plastid. It is found in the chloroplast. The enzyme catalyses (2E)-geranyl diphosphate = (4S)-limonene + diphosphate. Its pathway is terpene metabolism; oleoresin biosynthesis. In terms of biological role, involved in defensive oleoresin formation in conifers in response to insect attack or other injury. Involved in monoterpene (C10) olefins biosynthesis. The sequence is that of Limonene synthase, chloroplastic (ag10) from Abies grandis (Grand fir).